The following is a 184-amino-acid chain: MSKTFKAIRDRTYSGVGDLIKLLPTGTVFLFQFLNPVLTNNGHCLLINKYLTGVLIVICAFSCCFTCFTDSYRTRDGYVHYGVATVKGLWPDSSSVDLSSKRLRVGDFVHAFFSLIVFSVISLLDANTVNCFYPGFGSAGKIFLMVLPPVIGVISGAVFTVFPSRRHGIGNPSDHSEDDASEMK.

Transmembrane regions (helical) follow at residues 19–39 (LIKL…PVLT), 45–65 (LLIN…SCCF), 105–125 (VGDF…SLLD), and 142–162 (IFLM…FTVF).

This sequence belongs to the plant DMP1 protein family. Expressed constitutively in leaves, stems, flowers, siliques and roots.

Its subcellular location is the endoplasmic reticulum membrane. It localises to the vacuole membrane. In terms of biological role, involved in membrane remodeling. This is Protein DMP2 from Arabidopsis thaliana (Mouse-ear cress).